Reading from the N-terminus, the 137-residue chain is Nucleoside diphosphate kinase (137 aa).

ATP contacts are provided by Lys10, Phe59, Arg87, Thr93, Arg104, and Asn114. Residue His117 is the Pros-phosphohistidine intermediate of the active site.

The protein belongs to the NDK family. Homotetramer. The cofactor is Mg(2+).

The protein localises to the cytoplasm. The enzyme catalyses a 2'-deoxyribonucleoside 5'-diphosphate + ATP = a 2'-deoxyribonucleoside 5'-triphosphate + ADP. It catalyses the reaction a ribonucleoside 5'-diphosphate + ATP = a ribonucleoside 5'-triphosphate + ADP. Its function is as follows. Major role in the synthesis of nucleoside triphosphates other than ATP. The ATP gamma phosphate is transferred to the NDP beta phosphate via a ping-pong mechanism, using a phosphorylated active-site intermediate. The chain is Nucleoside diphosphate kinase from Streptomyces avermitilis (strain ATCC 31267 / DSM 46492 / JCM 5070 / NBRC 14893 / NCIMB 12804 / NRRL 8165 / MA-4680).